A 135-amino-acid chain; its full sequence is Ribonuclease P protein component 2 (135 aa).

This sequence belongs to the eukaryotic/archaeal RNase P protein component 2 family. In terms of assembly, consists of a catalytic RNA component and at least 4-5 protein subunits.

Its subcellular location is the cytoplasm. It catalyses the reaction Endonucleolytic cleavage of RNA, removing 5'-extranucleotides from tRNA precursor.. Part of ribonuclease P, a protein complex that generates mature tRNA molecules by cleaving their 5'-ends. This Methanosarcina barkeri (strain Fusaro / DSM 804) protein is Ribonuclease P protein component 2.